The chain runs to 399 residues: Succinate--CoA ligase [ADP-forming] subunit beta (399 aa).

An ATP-grasp domain is found at 9–254 (KAVLKSFGAP…TTEEDEKEIE (246 aa)). Residues lysine 46, 53–55 (GRG), glutamate 109, alanine 112, and glutamate 117 each bind ATP. Asparagine 209 and aspartate 223 together coordinate Mg(2+). Substrate-binding positions include asparagine 274 and 331 to 333 (GIM).

This sequence belongs to the succinate/malate CoA ligase beta subunit family. As to quaternary structure, heterotetramer of two alpha and two beta subunits. It depends on Mg(2+) as a cofactor.

The enzyme catalyses succinate + ATP + CoA = succinyl-CoA + ADP + phosphate. It catalyses the reaction GTP + succinate + CoA = succinyl-CoA + GDP + phosphate. It functions in the pathway carbohydrate metabolism; tricarboxylic acid cycle; succinate from succinyl-CoA (ligase route): step 1/1. Its function is as follows. Succinyl-CoA synthetase functions in the citric acid cycle (TCA), coupling the hydrolysis of succinyl-CoA to the synthesis of either ATP or GTP and thus represents the only step of substrate-level phosphorylation in the TCA. The beta subunit provides nucleotide specificity of the enzyme and binds the substrate succinate, while the binding sites for coenzyme A and phosphate are found in the alpha subunit. This chain is Succinate--CoA ligase [ADP-forming] subunit beta, found in Maricaulis maris (strain MCS10) (Caulobacter maris).